A 500-amino-acid polypeptide reads, in one-letter code: MLSTSQSRSFKNKFRAAFWPVHNYELGKFIPISALMFCILFNQNILRILKDSILISEISAEIAGFAKVYCVTPVAALFVIIYAKMINHLTFEKIFYYLSAFFISCFILFAFVIYPNIHIFHVHPDTLSDWMNKYPHFKWYISLVGNWGYIVYYSLAELWPNIFYVLLFWQFTNELTTTEEAKRFYTLFSLFGNSSLILVGFLMMNLSSEDTIIKKFVSISDSKITLVQVSTTIVAIVAIICCLLVRFISKYIFTNPLFYAKIKKSRSTTQRMGLIKSFKYIAKSKYLWLLLICSAAFGFAINLVEAVWKAKIKELYPTVNTYAEFNSLYILWTGVAIIVMTIIGNNVMRMHNWFVAAVISPVIIMVTGILFFVLIVFDQQILSLFDGAILMSPLALAVSIGGIQNILAKGTKYSIWDTSREMLYIPLDDELKTKGKAAVDVISAKIGKSSSGLVQSIIFTLVPNATFTSISPILMVVFTFVCFAWIYAVRKIYFEYQKIT.

11 helical membrane-spanning segments follow: residues 26–46, 62–82, 94–114, 149–169, 184–204, 224–244, 287–307, 328–348, 357–377, 381–401, and 469–489; these read LGKF…QNIL, IAGF…VIIY, IFYY…FVIY, YIVY…LLFW, FYTL…FLMM, ITLV…CCLL, LWLL…VEAV, LYIL…NNVM, AVIS…LIVF, ILSL…VSIG, and SISP…IYAV.

It belongs to the ADP/ATP translocase tlc family.

It localises to the cell membrane. Provides the rickettsial cell with host ATP in exchange for rickettsial ADP. This is an obligate exchange system. This energy acquiring activity is an important component of rickettsial parasitism. This chain is ADP,ATP carrier protein 5 (tlcE), found in Rickettsia typhi (strain ATCC VR-144 / Wilmington).